The chain runs to 272 residues: Cyanophycinase (272 aa).

Residues Ser-132, Glu-150, and His-174 each act as charge relay system in the active site.

Belongs to the peptidase S51 family.

The catalysed reaction is [L-4-(L-arginin-2-N-yl)aspartate](n) + H2O = [L-4-(L-arginin-2-N-yl)aspartate](n-1) + L-4-(L-arginin-2-N-yl)aspartate. In terms of biological role, exopeptidase that catalyzes the hydrolytic cleavage of multi-L-arginyl-poly-L-aspartic acid (cyanophycin; a water-insoluble reserve polymer) into aspartate-arginine dipeptides. In Geminocystis herdmanii (strain PCC 6308) (Synechocystis sp. (strain PCC 6308)), this protein is Cyanophycinase (cphB).